Consider the following 352-residue polypeptide: MEDSQETSPSSNNSSEELSSALHLSKGMSIFLDILRRADKNDDGKLSFEEFKAYFADGVLSGEELHELFHTIDTHNTNNLDTEELCEYFSQHLGEYENVLAALEDLNLSILKAMGKTKKDYQEASNLEQFVTRFLLKETLNQLQSLQNSLECAMETTEEQTRQERQGPAKPEVLSIQWPGKRSSRRVQRHNSFSPNSPQFNVSGPGLLEEDNQWMTQINRLQKLIDRLEKKDLKLEPLEEEIIEGNTKSHIMLVQRQMSVIEEDLEEFQLALKHYVESASSQSGCLRISIQKLSNESRYMIYEFWENSSVWNSHLQTNYSKTFQRSNVDFLETPELTSTMLVPASWWILNNN.

Ser4 is modified (phosphoserine). 2 consecutive EF-hand domains span residues 26–61 (KGMS…GVLS) and 60–95 (LSGE…HLGE). Asp39, Asn41, Asp43, Lys45, and Glu50 together coordinate Ca(2+). Positions 135–163 (LLKETLNQLQSLQNSLECAMETTEEQTRQ) form a coiled coil. Residues 180–202 (GKRSSRRVQRHNSFSPNSPQFNV) are disordered. Residues 190-202 (HNSFSPNSPQFNV) show a composition bias toward polar residues. Phosphoserine is present on residues Ser192 and Ser197. Positions 209–275 (EEDNQWMTQI…EEFQLALKHY (67 aa)) form a coiled coil. An ABM domain is found at 252-340 (MLVQRQMSVI…LETPELTSTM (89 aa)).

Interacts with STX1. May interact with CPNE6.

The protein localises to the cytoplasm. The chain is N-terminal EF-hand calcium-binding protein 1 (NECAB1) from Pongo abelii (Sumatran orangutan).